The following is a 506-amino-acid chain: MHRHDCFKTPADEDELDDIDDDMVVGVIAEIEQEVLNESESDDDEYDLADMGAPEPERNDGNISSNESISSDGSFDPNAEDTDSDDSMLDEAATAGASIAKRRKEQNAMDGAEPSGSGPSGSGDYSHLDEDDETDETVRAMIAAIKKPRSAPPEIRLEDFITDICFHPERDIIALATIIGDVHLYEYGNEENKLLRSIEVHAKACRDVEFTEDGRSLITCSKDKCVMVTDMETEKLKKLYETAHDDAINKLHVLDERLFATGDDAGTVKLWDFRTKDAIFELKEVEDQITQMLTNEQNKLLLATSADGYLTTFNIGARKLYVQSEPYEEELNCMGIYRGSSKLVVGTSKGRLYTYNWGYFGYHCDMYPGVKSPISLMIPITDRIACVAGEDGNIRACHIAPYRNLGVVGQHNMPIESLDINSSGELLASSSHNNDVRFWNVKYFEDFGDIKYNEKHNAYKDKRHNLPSSKCTNASDFFADMTKEQDDDDNDDGGNNTTAAGSNNVT.

Residues 1 to 11 (MHRHDCFKTPA) show a composition bias toward basic and acidic residues. Disordered stretches follow at residues 1–20 (MHRH…DDID), 33–87 (QEVL…SDDS), and 100–132 (AKRR…DEDD). Over residues 33–48 (QEVLNESESDDDEYDL) the composition is skewed to acidic residues. Residues 61–74 (GNISSNESISSDGS) show a composition bias toward low complexity. Residues 78 to 87 (NAEDTDSDDS) are compositionally biased toward acidic residues. 6 WD repeats span residues 156–195 (RLED…NKLL), 200–239 (VHAK…LKKL), 243–281 (AHDD…AIFE), 284–323 (EVED…LYVQ), 326–365 (PYEE…YHCD), and 410–449 (QHNM…DFGD). The tract at residues 480–506 (DMTKEQDDDDNDDGGNNTTAAGSNNVT) is disordered. The segment covering 493–506 (GGNNTTAAGSNNVT) has biased composition (low complexity).

This sequence belongs to the WD repeat WDR55 family.

This chain is WD repeat-containing protein 55 homolog, found in Drosophila mojavensis (Fruit fly).